The sequence spans 358 residues: Methionine aminopeptidase 2 (358 aa).

His111 is a binding site for substrate. A divalent metal cation is bound by residues Asp131, Asp142, and His211. His219 is a binding site for substrate. The a divalent metal cation site is built by Glu244 and Glu339.

It belongs to the peptidase M24A family. Methionine aminopeptidase eukaryotic type 2 subfamily. The cofactor is Co(2+). Requires Zn(2+) as cofactor. It depends on Mn(2+) as a cofactor. Fe(2+) is required as a cofactor.

It is found in the cytoplasm. It catalyses the reaction Release of N-terminal amino acids, preferentially methionine, from peptides and arylamides.. Its function is as follows. Cotranslationally removes the N-terminal methionine from nascent proteins. The N-terminal methionine is often cleaved when the second residue in the primary sequence is small and uncharged (Met-Ala-, Cys, Gly, Pro, Ser, Thr, or Val). This chain is Methionine aminopeptidase 2, found in Laccaria bicolor (strain S238N-H82 / ATCC MYA-4686) (Bicoloured deceiver).